The chain runs to 363 residues: MSEVPQSTSDVHPDAECHLSRYTTLRLGGWATRVVTATSADDLVRGVREAGDRGERILVLAGGSNVVIGDAGFPGTVVLVRSRGLKVIETDTDTVTVRVEAGEPWDELVAHTVANEWSGLECLSGIPGSTGATPIQNVGAYGQEVAETITGVQVYDRVTGTTARIEARDCGFSYRSSIFKRSDRWVVLSVDFRLARSPLSGPVRYAELARALDVAVGDRVPLAKARAAVLRLRAGKGMVLDAADPDTWSVGSFFTNPVLDRAGYERLRERAADVGEPPSWPGTDGTVKVSAAWLIDKSGFGKGHPGPAGVVTISTKHTLALTHRSGTARTEDLVRLAREIRRGVQARFGVTLHPEPVLVNCAL.

The 171-residue stretch at 27 to 197 folds into the FAD-binding PCMH-type domain; it reads LGGWATRVVT…LSVDFRLARS (171 aa). The active site involves arginine 175. The Proton donor role is filled by serine 252. Glutamate 355 is a catalytic residue.

The protein belongs to the MurB family. It depends on FAD as a cofactor.

The protein localises to the cytoplasm. The enzyme catalyses UDP-N-acetyl-alpha-D-muramate + NADP(+) = UDP-N-acetyl-3-O-(1-carboxyvinyl)-alpha-D-glucosamine + NADPH + H(+). It functions in the pathway cell wall biogenesis; peptidoglycan biosynthesis. In terms of biological role, cell wall formation. This chain is UDP-N-acetylenolpyruvoylglucosamine reductase, found in Salinispora arenicola (strain CNS-205).